The sequence spans 2489 residues: Protein YPR117W (2489 aa).

Helical transmembrane passes span 19–39 (FMLF…WILM) and 128–148 (VLSI…LALT). Residues Asn191, Asn210, Asn311, Asn452, Asn468, Asn605, Asn638, Asn663, Asn698, Asn789, Asn835, Asn981, Asn1255, Asn1404, and Asn1476 are each glycosylated (N-linked (GlcNAc...) asparagine). A coiled-coil region spans residues 1610–1676 (LTQEKLATER…RLHTVNTILS (67 aa)). Residues 1685–1704 (PGGNTDGDSSSSLSDTDVNL) form a disordered region. Over residues 1690 to 1704 (DGDSSSSLSDTDVNL) the composition is skewed to low complexity. N-linked (GlcNAc...) asparagine glycosylation is found at Asn1978 and Asn2189. Residues Ser2254 and Ser2278 each carry the phosphoserine modification. A glycan (N-linked (GlcNAc...) asparagine) is linked at Asn2279. Over residues 2451–2471 (SSTHSSDIRSINSDETYNEND) the composition is skewed to polar residues. Residues 2451 to 2489 (SSTHSSDIRSINSDETYNENDGNGVKPFYPVTSEFSKNK) form a disordered region.

It is found in the cell membrane. The protein localises to the endoplasmic reticulum membrane. It localises to the mitochondrion membrane. Tube-forming lipid transport protein which may bind to phosphatidylinositols and may affect phosphatidylinositol-4,5-bisphosphate (PtdIns-4,5-P2) distribution. The sequence is that of Protein YPR117W from Saccharomyces cerevisiae (strain ATCC 204508 / S288c) (Baker's yeast).